We begin with the raw amino-acid sequence, 241 residues long: MSDKNPRYSRILLKLSGEALAGTKDMGIDTEVLDKMSLSIAHLRGLGVQVGIVVGGGNLYRGAQLQKEGLVGRVTGDQMGMLATVMNGLAMRDALERRNIKTRLMSALPIGEVTESYSSRNAIRYLKNGEVCIFVAGTGNPFFTTDTAACLRGIEIEAGLILKATKVDGVYDKDPSLHSDAVKYDGLTFDEVLEQKLGVMDLTAIALCREHDVPLQVFDMNKPNALLNVVMGENEGTRVYH.

14-17 (KLSG) is an ATP binding site. G56 contributes to the UMP binding site. ATP contacts are provided by G57 and R61. Residues D77 and 138–145 (TGNPFFTT) contribute to the UMP site. 3 residues coordinate ATP: T165, Y171, and D174.

This sequence belongs to the UMP kinase family. As to quaternary structure, homohexamer.

It is found in the cytoplasm. The enzyme catalyses UMP + ATP = UDP + ADP. The protein operates within pyrimidine metabolism; CTP biosynthesis via de novo pathway; UDP from UMP (UMPK route): step 1/1. Inhibited by UTP. Its function is as follows. Catalyzes the reversible phosphorylation of UMP to UDP. The sequence is that of Uridylate kinase from Psychrobacter cryohalolentis (strain ATCC BAA-1226 / DSM 17306 / VKM B-2378 / K5).